A 152-amino-acid polypeptide reads, in one-letter code: Deoxyuridine 5'-triphosphate nucleotidohydrolase (152 aa).

Residues 71 to 73 (RSG), asparagine 84, 88 to 90 (LID), and methionine 98 contribute to the substrate site.

It belongs to the dUTPase family. It depends on Mg(2+) as a cofactor.

It carries out the reaction dUTP + H2O = dUMP + diphosphate + H(+). Its pathway is pyrimidine metabolism; dUMP biosynthesis; dUMP from dCTP (dUTP route): step 2/2. Functionally, this enzyme is involved in nucleotide metabolism: it produces dUMP, the immediate precursor of thymidine nucleotides and it decreases the intracellular concentration of dUTP so that uracil cannot be incorporated into DNA. The chain is Deoxyuridine 5'-triphosphate nucleotidohydrolase from Salmonella arizonae (strain ATCC BAA-731 / CDC346-86 / RSK2980).